A 157-amino-acid polypeptide reads, in one-letter code: UPF0179 protein Mhun_1135 (157 aa).

This sequence belongs to the UPF0179 family.

This is UPF0179 protein Mhun_1135 from Methanospirillum hungatei JF-1 (strain ATCC 27890 / DSM 864 / NBRC 100397 / JF-1).